Here is a 430-residue protein sequence, read N- to C-terminus: MPSLWDYLNKDKKPVIKKVEPPKKKEIKRDIPLFIKYRPKTLDEVENQEQAKQILRDYVINYKKKYKGKALLLYGPPGTGKTSSVYALANELGYEVLEVNASDERDAIHIHHIVGEASKGKPLFHKGRIILVDEVDGLSGKEDRGGVGALVNIIKQSSWPIICTANDPWDQKLKKLREISIMVEFKRLSPKHVYNVLKKIVTNEKIKISDKILWDIAYKSGGDLRAAINDLETIIKSGIIDENFVKALGNREQEIDIFKALGIMFKTENLATAVSAFNNVDLEFDEIFPWLEENIPVEYKRLDDIYRAYYWLGKADIFRKRIIKTQHWRLLVYAQIDAYGGIALAKNKKYPGFTRYQPPKRLKLLAQMKEKLEKLREHVSKLREKLHMSKRDIIKYYVSFALKLKNLNKTVADKFLKAIGLSLKEIEEIR.

ATP is bound at residue 75-82 (GPPGTGKT).

It belongs to the activator 1 small subunits family. RfcL subfamily. Heteromultimer composed of small subunits (RfcS) and large subunits (RfcL).

Its function is as follows. Part of the RFC clamp loader complex which loads the PCNA sliding clamp onto DNA. The protein is Replication factor C large subunit of Nanoarchaeum equitans (strain Kin4-M).